Here is a 179-residue protein sequence, read N- to C-terminus: Small ribosomal subunit protein uS5 (179 aa).

One can recognise an S5 DRBM domain in the interval 22–85 (MIEKLVAVNR…EYARKRMANV (64 aa)).

The protein belongs to the universal ribosomal protein uS5 family. Part of the 30S ribosomal subunit. Contacts proteins S4 and S8.

Functionally, with S4 and S12 plays an important role in translational accuracy. Located at the back of the 30S subunit body where it stabilizes the conformation of the head with respect to the body. This Xylella fastidiosa (strain M12) protein is Small ribosomal subunit protein uS5.